We begin with the raw amino-acid sequence, 514 residues long: 2,3-bisphosphoglycerate-independent phosphoglycerate mutase (514 aa).

Mn(2+)-binding residues include D14 and S64. The Phosphoserine intermediate role is filled by S64. Substrate is bound by residues H125, 155–156 (RD), R187, R193, 263–266 (RADR), and K336. Mn(2+) contacts are provided by D403, H407, D444, H445, and H463.

It belongs to the BPG-independent phosphoglycerate mutase family. As to quaternary structure, monomer. Mn(2+) serves as cofactor.

It catalyses the reaction (2R)-2-phosphoglycerate = (2R)-3-phosphoglycerate. It functions in the pathway carbohydrate degradation; glycolysis; pyruvate from D-glyceraldehyde 3-phosphate: step 3/5. Catalyzes the interconversion of 2-phosphoglycerate and 3-phosphoglycerate. The sequence is that of 2,3-bisphosphoglycerate-independent phosphoglycerate mutase from Shewanella baltica (strain OS185).